The primary structure comprises 211 residues: tRNA (guanine-N(7)-)-methyltransferase (211 aa).

Positions 44, 69, 96, and 118 each coordinate S-adenosyl-L-methionine. Asp118 is a catalytic residue. Position 122 (Lys122) interacts with substrate. Residues 124–129 (RHEKRR) are interaction with RNA. Substrate is bound by residues Asp154 and 191–194 (TEYE).

The protein belongs to the class I-like SAM-binding methyltransferase superfamily. TrmB family.

The enzyme catalyses guanosine(46) in tRNA + S-adenosyl-L-methionine = N(7)-methylguanosine(46) in tRNA + S-adenosyl-L-homocysteine. Its pathway is tRNA modification; N(7)-methylguanine-tRNA biosynthesis. Catalyzes the formation of N(7)-methylguanine at position 46 (m7G46) in tRNA. The polypeptide is tRNA (guanine-N(7)-)-methyltransferase (Streptococcus equi subsp. equi (strain 4047)).